The chain runs to 196 residues: Imidazoleglycerol-phosphate dehydratase (196 aa).

The protein belongs to the imidazoleglycerol-phosphate dehydratase family.

It is found in the cytoplasm. The enzyme catalyses D-erythro-1-(imidazol-4-yl)glycerol 3-phosphate = 3-(imidazol-4-yl)-2-oxopropyl phosphate + H2O. The protein operates within amino-acid biosynthesis; L-histidine biosynthesis; L-histidine from 5-phospho-alpha-D-ribose 1-diphosphate: step 6/9. The polypeptide is Imidazoleglycerol-phosphate dehydratase (Halobacterium salinarum (strain ATCC 700922 / JCM 11081 / NRC-1) (Halobacterium halobium)).